The primary structure comprises 88 residues: Small cysteine-rich outer membrane protein OmcA (88 aa).

Residues 1–18 (MKKTALLAALCSVVSLSS) form the signal peptide. A lipid anchor (N-palmitoyl cysteine) is attached at C19. C19 carries S-diacylglycerol cysteine lipidation.

As to quaternary structure, part of a disulfide cross-linked outer membrane complex (COMC) composed of the major outer membrane porin (MOMP), the small cysteine-rich protein (OmcA) and the large cysteine-rich periplasmic protein (OmcB).

Its subcellular location is the cell outer membrane. In elementary bodies (EBs, the infectious stage, which is able to survive outside the host cell) provides the structural integrity of the outer envelope through disulfide cross-links with the large cysteine-rich periplasmic protein and the major outer membrane porin. It has been described in publications as the Sarkosyl-insoluble COMC (Chlamydia outer membrane complex), and serves as the functional equivalent of peptidoglycan. The sequence is that of Small cysteine-rich outer membrane protein OmcA (omcA) from Chlamydia trachomatis serovar B (strain Jali20/OT).